The following is a 331-amino-acid chain: Ketol-acid reductoisomerase (NADP(+)) (331 aa).

One can recognise a KARI N-terminal Rossmann domain in the interval 2-182 (ARMYYDEDAN…GGTRAGVLET (181 aa)). Residues 25 to 28 (YGSQ), Ser51, Ser53, and 83 to 86 (DEVQ) contribute to the NADP(+) site. Residue His108 is part of the active site. Gly134 is an NADP(+) binding site. The region spanning 183 to 328 (TFREETETDL…KDLRAMFSWL (146 aa)) is the KARI C-terminal knotted domain. Mg(2+)-binding residues include Asp191, Glu195, Glu227, and Glu231. Ser252 contributes to the substrate binding site.

Belongs to the ketol-acid reductoisomerase family. Mg(2+) serves as cofactor.

It catalyses the reaction (2R)-2,3-dihydroxy-3-methylbutanoate + NADP(+) = (2S)-2-acetolactate + NADPH + H(+). It carries out the reaction (2R,3R)-2,3-dihydroxy-3-methylpentanoate + NADP(+) = (S)-2-ethyl-2-hydroxy-3-oxobutanoate + NADPH + H(+). The protein operates within amino-acid biosynthesis; L-isoleucine biosynthesis; L-isoleucine from 2-oxobutanoate: step 2/4. Its pathway is amino-acid biosynthesis; L-valine biosynthesis; L-valine from pyruvate: step 2/4. In terms of biological role, involved in the biosynthesis of branched-chain amino acids (BCAA). Catalyzes an alkyl-migration followed by a ketol-acid reduction of (S)-2-acetolactate (S2AL) to yield (R)-2,3-dihydroxy-isovalerate. In the isomerase reaction, S2AL is rearranged via a Mg-dependent methyl migration to produce 3-hydroxy-3-methyl-2-ketobutyrate (HMKB). In the reductase reaction, this 2-ketoacid undergoes a metal-dependent reduction by NADPH to yield (R)-2,3-dihydroxy-isovalerate. The sequence is that of Ketol-acid reductoisomerase (NADP(+)) from Nostoc punctiforme (strain ATCC 29133 / PCC 73102).